Consider the following 481-residue polypeptide: RAC-beta serine/threonine-protein kinase (481 aa).

The residue at position 1 (Met-1) is an N-acetylmethionine. Residues 5–108 enclose the PH domain; the sequence is SVIKEGWLHK…WMRAIQMVAN (104 aa). The residue at position 34 (Ser-34) is a Phosphoserine. Cysteines 60 and 77 form a disulfide. Ser-126 bears the Phosphoserine mark. O-linked (GlcNAc) serine glycosylation is found at Ser-128 and Ser-131. The region spanning 152–409 is the Protein kinase domain; that stretch reads FDYLKLLGKG…AKEVMEHRFF (258 aa). ATP contacts are provided by residues 158–166 and Lys-181; that span reads LGKGTFGKV. The active-site Proton acceptor is Asp-275. Residues Asn-280 and Asp-293 each coordinate Mn(2+). Cys-297 and Cys-311 are joined by a disulfide. A glycan (O-linked (GlcNAc) threonine) is linked at Thr-306. Thr-309 is modified (phosphothreonine; by PDPK1). Residue Thr-313 is glycosylated (O-linked (GlcNAc) threonine). The AGC-kinase C-terminal domain maps to 410-481; it reads LSINWQDVVQ…QFSYSASIRE (72 aa). A Phosphoserine modification is found at Ser-447. Thr-451 carries the phosphothreonine modification. A phosphoserine mark is found at Ser-474 and Ser-478. Ser-474 carries an O-linked (GlcNAc) serine; alternate glycan.

Belongs to the protein kinase superfamily. AGC Ser/Thr protein kinase family. RAC subfamily. As to quaternary structure, interacts with BTBD10. Interacts with KCTD20. Interacts (via PH domain) with MTCP1, TCL1A and TCL1B; this interaction may facilitate AKT2 oligomerization and phosphorylation, hence increasing kinase activity. Interacts with PHB2; this interaction may be important for myogenic differentiation. Interacts (when phosphorylated) with CLIP3/ClipR-59; this interaction promotes AKT2 recruitment to the plasma membrane. Interacts with WDFY2/ProF (via WD repeats 1-3). Phosphorylation on Thr-309 and Ser-474 is required for full activity. Phosphorylation of the activation loop at Thr-309 by PDPK1/PDK1 is a prerequisite for full activation. Phosphorylated and activated by PDPK1/PDK1 in the presence of phosphatidylinositol 3,4,5-trisphosphate. Phosphorylation by mTORC2 in response to growth factors plays a key role in AKT1 activation: mTORC2 phosphorylates different sites depending on the context, such as Ser-474 or Ser-478, thereby facilitating subsequent phosphorylation of the activation loop by PDPK1/PDK1. In terms of processing, ubiquitinated; undergoes both 'Lys-48'- and 'Lys-63'-linked polyubiquitination. TRAF6 catalyzes 'Lys-63'-linked AKT2 ubiquitination; this modification may be important for AKT2 recruitment to the plasma membrane and for AKT2 activating phosphorylation. When phosphorylated, undergoes 'Lys-48'-polyubiquitination catalyzed by TTC3 in the nucleus, leading to its degradation by the proteasome. Post-translationally, O-GlcNAcylation at Thr-306 and Thr-313 inhibits activating phosphorylation at Thr-309 via the disruption of the interaction between AKT and PDPK1/PDK1. Widely expressed. Expressed in myoblasts.

The protein resides in the cytoplasm. It localises to the nucleus. Its subcellular location is the cell membrane. The protein localises to the early endosome. It carries out the reaction L-seryl-[protein] + ATP = O-phospho-L-seryl-[protein] + ADP + H(+). It catalyses the reaction L-threonyl-[protein] + ATP = O-phospho-L-threonyl-[protein] + ADP + H(+). Phosphorylation at Thr-309 (in the kinase domain) and Ser-474 (in the C-terminal regulatory region) is required for full activation. In adipocytes and hepatocytes, the activation is induced by insulin. Aminofurazans, such as 4-[2-(4-amino-2,5-dihydro-1,2,5-oxadiazol-3-yl)-6-{[(1S)-3-amino-1-phenylpropyl]oxy}-1-ethyl-1H-imidazo[4,5-c]pyridin-4-yl]-2-methylbut-3-yn-2-ol (compound 32), are potent AKT2 inhibitors. AKT2 phosphorylation of PKP1 is induced by insulin. Its function is as follows. Serine/threonine kinase closely related to AKT1 and AKT3. All 3 enzymes, AKT1, AKT2 and AKT3, are collectively known as AKT kinase. AKT regulates many processes including metabolism, proliferation, cell survival, growth and angiogenesis, through the phosphorylation of a range of downstream substrates. Over 100 substrates have been reported so far, although for most of them, the precise AKT kinase catalyzing the reaction was not specified. AKT regulates glucose uptake by mediating insulin-induced translocation of the SLC2A4/GLUT4 glucose transporter to the cell surface. Phosphorylation of PTPN1 at 'Ser-50' negatively modulates its phosphatase activity preventing dephosphorylation of the insulin receptor and the attenuation of insulin signaling. Phosphorylation of TBC1D4 triggers the binding of this effector to inhibitory 14-3-3 proteins, which is required for insulin-stimulated glucose transport. AKT also regulates the storage of glucose in the form of glycogen by phosphorylating GSK3A at 'Ser-21' and GSK3B at 'Ser-9', resulting in inhibition of its kinase activity. Phosphorylation of GSK3 isoforms by AKT is also thought to be one mechanism by which cell proliferation is driven. AKT also regulates cell survival via the phosphorylation of MAP3K5 (apoptosis signal-related kinase). Phosphorylation of 'Ser-83' decreases MAP3K5 kinase activity stimulated by oxidative stress and thereby prevents apoptosis. AKT mediates insulin-stimulated protein synthesis by phosphorylating TSC2 at 'Ser-939' and 'Thr-1462', thereby activating mTORC1 signaling and leading to both phosphorylation of 4E-BP1 and in activation of RPS6KB1. AKT is involved in the phosphorylation of members of the FOXO factors (Forkhead family of transcription factors), leading to binding of 14-3-3 proteins and cytoplasmic localization. In particular, FOXO1 is phosphorylated at 'Thr-24', 'Ser-256' and 'Ser-319'. FOXO3 and FOXO4 are phosphorylated on equivalent sites. AKT has an important role in the regulation of NF-kappa-B-dependent gene transcription and positively regulates the activity of CREB1 (cyclic AMP (cAMP)-response element binding protein). The phosphorylation of CREB1 induces the binding of accessory proteins that are necessary for the transcription of pro-survival genes such as BCL2 and MCL1. AKT phosphorylates 'Ser-454' on ATP citrate lyase (ACLY), thereby potentially regulating ACLY activity and fatty acid synthesis. Activates the 3B isoform of cyclic nucleotide phosphodiesterase (PDE3B) via phosphorylation of 'Ser-273', resulting in reduced cyclic AMP levels and inhibition of lipolysis. Phosphorylates PIKFYVE on 'Ser-318', which results in increased PI(3)P-5 activity. The Rho GTPase-activating protein DLC1 is another substrate and its phosphorylation is implicated in the regulation cell proliferation and cell growth. AKT plays a role as key modulator of the AKT-mTOR signaling pathway controlling the tempo of the process of newborn neurons integration during adult neurogenesis, including correct neuron positioning, dendritic development and synapse formation. Signals downstream of phosphatidylinositol 3-kinase (PI(3)K) to mediate the effects of various growth factors such as platelet-derived growth factor (PDGF), epidermal growth factor (EGF), insulin and insulin-like growth factor 1 (IGF1). AKT mediates the antiapoptotic effects of IGF1. Essential for the SPATA13-mediated regulation of cell migration and adhesion assembly and disassembly. May be involved in the regulation of the placental development. In response to lysophosphatidic acid stimulation, inhibits the ciliogenesis cascade. In this context, phosphorylates WDR44, hence stabilizing its interaction with Rab11 and preventing the formation of the ciliogenic Rab11-FIP3-RAB3IP complex. Also phosphorylates RAB3IP/Rabin8, thus may affect RAB3IP guanine nucleotide exchange factor (GEF) activity toward Rab8, which is important for cilia growth. Phosphorylates PKP1, facilitating its interaction with YWHAG and translocation to the nucleus, ultimately resulting in a reduction in keratinocyte intercellular adhesion. Phosphorylation of PKP1 increases PKP1 protein stability, translocation to the cytoplasm away from desmosome plaques and PKP1-driven cap-dependent translation. In terms of biological role, several AKT2-specific substrates have been identified, including ANKRD2, C2CD5, CLK2 and PITX2. May play a role in myoblast differentiation. In this context, may act through PITX2 phosphorylation. Unphosphorylated PITX2 associates with an ELAVL1/HuR-containing complex, which stabilizes CCND1 cyclin mRNA, ensuring cell proliferation. Phosphorylation by AKT2 impairs this association, leading to CCND1 mRNA destabilization and progression towards differentiation. Also involved in the negative regulation of myogenesis in response to stress conditions. In this context, acts by phosphorylating ANKRD2. May also be a key regulator of glucose uptake. Regulates insulin-stimulated glucose transport by the increase of glucose transporter GLUT4 translocation from intracellular stores to the plasma membrane. In this context, acts by phosphorylating C2CD5/CDP138 on 'Ser-197' in insulin-stimulated adipocytes. Through the phosphorylation of CLK2 on 'Thr-343', involved in insulin-regulated suppression of hepatic gluconeogenesis. The protein is RAC-beta serine/threonine-protein kinase of Homo sapiens (Human).